The following is a 911-amino-acid chain: Protein translocase subunit SecA (911 aa).

Residues Gln87, 105 to 109 (GEGKT), and Asp510 contribute to the ATP site. Cys896, Cys898, Cys907, and His908 together coordinate Zn(2+).

The protein belongs to the SecA family. As to quaternary structure, monomer and homodimer. Part of the essential Sec protein translocation apparatus which comprises SecA, SecYEG and auxiliary proteins SecDF-YajC and YidC. The cofactor is Zn(2+).

The protein resides in the cell inner membrane. The protein localises to the cytoplasm. It catalyses the reaction ATP + H2O + cellular proteinSide 1 = ADP + phosphate + cellular proteinSide 2.. Its function is as follows. Part of the Sec protein translocase complex. Interacts with the SecYEG preprotein conducting channel. Has a central role in coupling the hydrolysis of ATP to the transfer of proteins into and across the cell membrane, serving both as a receptor for the preprotein-SecB complex and as an ATP-driven molecular motor driving the stepwise translocation of polypeptide chains across the membrane. In Acinetobacter baumannii (strain SDF), this protein is Protein translocase subunit SecA.